The chain runs to 642 residues: Sodium- and chloride-dependent neutral and basic amino acid transporter B(0+) (642 aa).

The Cytoplasmic segment spans residues 1-44 (MDKLKCPSFFKCREKEKVSASSENFHVGENDENQDRGNWSKKSD). The next 3 helical transmembrane spans lie at 45-65 (YLLSMIGYAVGLGNVWRFPYL), 72-92 (GAFLIPYAIMLALAGLPLFFL), and 110-130 (ILPLFQGVGITMVLISIFVTI). The Extracellular portion of the chain corresponds to 131 to 234 (YYNVIIAYSL…RSSGMNETGV (104 aa)). 7 N-linked (GlcNAc...) asparagine glycosylation sites follow: asparagine 155, asparagine 163, asparagine 174, asparagine 189, asparagine 197, asparagine 202, and asparagine 230. The next 2 helical transmembrane spans lie at 235–255 (IVWYLALCLLLAWLIVGAALF) and 261–281 (SGKVVYFTALFPYVVLLILLV). N-linked (GlcNAc...) asparagine glycosylation occurs at asparagine 302. The next 7 membrane-spanning stretches (helical) occupy residues 315–335 (AATQIFYSLSVAWGGLVALSS), 348–368 (IVVCLTNCLTSVFAGFAIFSI), 399–419 (LAQLPGGPFWSILFFFMLLTL), 450–477 (ITLGCCLVLFLLGLVCVTQAGIYWVHLI), 480–500 (FCAGWGILIAAILELVGIIWI), 528–548 (CWFVITPILLIAIFIWSLVQF), and 563–583 (VALGWCMIVFCIIWIPIMAII). The Cytoplasmic portion of the chain corresponds to 584–642 (KIIQAKGNIFQRLISCCRPASNWGPYLEQHRGERYKDMVDPKKEADHEIPTVSGSRKPE). The segment covering 622-632 (VDPKKEADHEI) has biased composition (basic and acidic residues). The disordered stretch occupies residues 622–642 (VDPKKEADHEIPTVSGSRKPE).

Belongs to the sodium:neurotransmitter symporter (SNF) (TC 2.A.22) family. SLC6A14 subfamily. Levels are highest in adult and fetal lung, in trachea and salivary gland. Lower levels detected in mammary gland, stomach and pituitary gland, and very low levels in colon, uterus, prostate and testis.

It localises to the membrane. It is found in the apical cell membrane. It carries out the reaction glycine(out) + chloride(out) + 2 Na(+)(out) = glycine(in) + chloride(in) + 2 Na(+)(in). The enzyme catalyses L-leucine(out) + chloride(out) + 2 Na(+)(out) = L-leucine(in) + chloride(in) + 2 Na(+)(in). It catalyses the reaction L-glutamine(out) + chloride(out) + 2 Na(+)(out) = L-glutamine(in) + chloride(in) + 2 Na(+)(in). The catalysed reaction is L-arginine(out) + chloride(out) + 2 Na(+)(out) = L-arginine(in) + chloride(in) + 2 Na(+)(in). It carries out the reaction (R)-carnitine(out) + chloride(out) + 2 Na(+)(out) = (R)-carnitine(in) + chloride(in) + 2 Na(+)(in). The enzyme catalyses O-butanoyl-(R)-carnitine(out) + chloride(out) + 2 Na(+)(out) = O-butanoyl-(R)-carnitine(in) + chloride(in) + 2 Na(+)(in). It catalyses the reaction O-propanoyl-(R)-carnitine(out) + chloride(out) + 2 Na(+)(out) = O-propanoyl-(R)-carnitine(in) + chloride(in) + 2 Na(+)(in). The catalysed reaction is L-isoleucine(out) + chloride(out) + 2 Na(+)(out) = L-isoleucine(in) + chloride(in) + 2 Na(+)(in). It carries out the reaction L-methionine(out) + chloride(out) + 2 Na(+)(out) = L-methionine(in) + chloride(in) + 2 Na(+)(in). The enzyme catalyses L-valine(out) + chloride(out) + 2 Na(+)(out) = L-valine(in) + chloride(in) + 2 Na(+)(in). It catalyses the reaction L-alanine(out) + chloride(out) + 2 Na(+)(out) = L-alanine(in) + chloride(in) + 2 Na(+)(in). The catalysed reaction is L-serine(out) + chloride(out) + 2 Na(+)(out) = L-serine(in) + chloride(in) + 2 Na(+)(in). It carries out the reaction L-cysteine(out) + chloride(out) + 2 Na(+)(out) = L-cysteine(in) + chloride(in) + 2 Na(+)(in). The enzyme catalyses L-asparagine(out) + chloride(out) + 2 Na(+)(out) = L-asparagine(in) + chloride(in) + 2 Na(+)(in). It catalyses the reaction L-threonine(out) + chloride(out) + 2 Na(+)(out) = L-threonine(in) + chloride(in) + 2 Na(+)(in). The catalysed reaction is L-phenylalanine(out) + chloride(out) + 2 Na(+)(out) = L-phenylalanine(in) + chloride(in) + 2 Na(+)(in). It carries out the reaction L-tryptophan(out) + chloride(out) + 2 Na(+)(out) = L-tryptophan(in) + chloride(in) + 2 Na(+)(in). The enzyme catalyses L-tyrosine(out) + chloride(out) + 2 Na(+)(out) = L-tyrosine(in) + chloride(in) + 2 Na(+)(in). It catalyses the reaction L-histidine(out) + chloride(out) + 2 Na(+)(out) = L-histidine(in) + chloride(in) + 2 Na(+)(in). The catalysed reaction is L-lysine(out) + chloride(out) + 2 Na(+)(out) = L-lysine(in) + chloride(in) + 2 Na(+)(in). It carries out the reaction beta-alanine(out) + chloride(out) + 2 Na(+)(out) = beta-alanine(in) + chloride(in) + 2 Na(+)(in). Its function is as follows. Amino acid transporter that plays an important role in the absorption of amino acids in the intestinal tract. Mediates the uptake of a broad range of neutral and cationic amino acids (with the exception of proline) in a Na(+)/Cl(-)-dependent manner. Transports non-alpha-amino acids such as beta-alanine with low affinity, and has a higher affinity for dipolar and cationic amino acids such as leucine and lysine. Can also transport carnitine, butirylcarnitine and propionylcarnitine coupled to the transmembrane gradients of Na(+) and Cl(-). This is Sodium- and chloride-dependent neutral and basic amino acid transporter B(0+) from Homo sapiens (Human).